The chain runs to 739 residues: Photosystem I P700 chlorophyll a apoprotein A1 (739 aa).

Helical transmembrane passes span 61–84 (IFSAHFGHLAVVFVWLSGMYFHGA), 147–170 (LYVTAIGGLVMAALMVFAGWFHYH), 186–210 (MNHHLSVLLGCGSLGWTGHLIHVSL), 281–299 (VAHHHLAIAVLFIIAGHMY), 336–359 (WHAQLAVNLALLGSLTIVIAHHMY), 375–401 (LSLFTHHTWIGGFLIVGAGAHGAIFMV), 423–445 (AIISHLNWVCIFLGFHSFGLYIH), and 520–538 (FMVHHIHAFTIHVTVLILL). [4Fe-4S] cluster is bound by residues Cys-562 and Cys-571. Transmembrane regions (helical) follow at residues 578 to 599 (HVFLGLFWMYNSLSIVIFHFSW) and 653 to 675 (LSAYGIMFLAGHFVFAFSLMFLF). His-664 contributes to the chlorophyll a' binding site. Positions 672 and 680 each coordinate chlorophyll a. Trp-681 is a binding site for phylloquinone. A helical membrane pass occupies residues 713-733 (AVGVAHYLLGGIVTTWAFFLA).

The protein belongs to the PsaA/PsaB family. In terms of assembly, the PsaA/B heterodimer binds the P700 chlorophyll special pair and subsequent electron acceptors. PSI consists of a core antenna complex that captures photons, and an electron transfer chain that converts photonic excitation into a charge separation. The cyanobacterial PSI reaction center is composed of one copy each of PsaA,B,C,D,E,F,I,J,K,L,M and X, and forms trimeric complexes. Requires PSI electron transfer chain: 5 chlorophyll a, 1 chlorophyll a', 2 phylloquinones and 3 4Fe-4S clusters. PSI core antenna: 90 chlorophyll a, 22 carotenoids, 3 phospholipids and 1 galactolipid. P700 is a chlorophyll a/chlorophyll a' dimer, A0 is one or more chlorophyll a, A1 is one or both phylloquinones and FX is a shared 4Fe-4S iron-sulfur center. as cofactor.

Its subcellular location is the cellular thylakoid membrane. The enzyme catalyses reduced [plastocyanin] + hnu + oxidized [2Fe-2S]-[ferredoxin] = oxidized [plastocyanin] + reduced [2Fe-2S]-[ferredoxin]. Functionally, psaA and PsaB bind P700, the primary electron donor of photosystem I (PSI), as well as the electron acceptors A0, A1 and FX. PSI is a plastocyanin/cytochrome c6-ferredoxin oxidoreductase, converting photonic excitation into a charge separation, which transfers an electron from the donor P700 chlorophyll pair to the spectroscopically characterized acceptors A0, A1, FX, FA and FB in turn. Oxidized P700 is reduced on the lumenal side of the thylakoid membrane by plastocyanin or cytochrome c6. This chain is Photosystem I P700 chlorophyll a apoprotein A1, found in Picosynechococcus sp. (strain ATCC 27264 / PCC 7002 / PR-6) (Agmenellum quadruplicatum).